A 349-amino-acid chain; its full sequence is PDZ and LIM domain protein 2 (349 aa).

A PDZ domain is found at 1 to 84 (MALTVDVAGP…PLRLQLDRSQ (84 aa)). A disordered region spans residues 74–147 (SPLRLQLDRS…TPPPTSPVAL (74 aa)). The segment covering 81–94 (DRSQTASPGQTNGE) has biased composition (polar residues). Phosphoserine is present on residues Ser124, Ser127, Ser129, Ser134, and Ser137. Phosphothreonine occurs at positions 138 and 142. 2 positions are modified to phosphoserine: Ser143 and Ser163. A disordered region spans residues 169-212 (AHHLTYPGHPTSQQAGHSSPSDSAVRVLLHSPGRPSSPRFSSLD). A compositionally biased stretch (polar residues) spans 178–190 (PTSQQAGHSSPSD). 6 positions are modified to phosphoserine: Ser199, Ser204, Ser205, Ser209, Ser210, and Ser263. Residues 199-210 (SPGRPSSPRFSS) show a composition bias toward low complexity. One can recognise an LIM zinc-binding domain in the interval 281-341 (HTCEKCSVNI…EKHARQRYSM (61 aa)).

As to quaternary structure, interacts with alpha-actinins ACTN1 and ACTN4, FLNA and MYH9. Interacts (via LIM zinc-binding domain) with MKRN2. Highly expressed in lung. Expressed at intermediate level in kidney, testis and spleen. Weakly expressed in heart and brain.

It localises to the cytoplasm. It is found in the cytoskeleton. Functionally, probable adapter protein located at the actin cytoskeleton that promotes cell attachment. Necessary for the migratory capacity of epithelial cells. Overexpression enhances cell adhesion to collagen and fibronectin and suppresses anchorage independent growth. May contribute to tumor cell migratory capacity. In Mus musculus (Mouse), this protein is PDZ and LIM domain protein 2 (Pdlim2).